A 238-amino-acid polypeptide reads, in one-letter code: tRNA (guanine-N(7)-)-methyltransferase (238 aa).

Positions 62, 87, 119, and 141 each coordinate S-adenosyl-L-methionine. Asp141 is an active-site residue. Substrate is bound by residues Lys145, Asp177, and 216–219 (TRYE).

It belongs to the class I-like SAM-binding methyltransferase superfamily. TrmB family.

The enzyme catalyses guanosine(46) in tRNA + S-adenosyl-L-methionine = N(7)-methylguanosine(46) in tRNA + S-adenosyl-L-homocysteine. The protein operates within tRNA modification; N(7)-methylguanine-tRNA biosynthesis. In terms of biological role, catalyzes the formation of N(7)-methylguanine at position 46 (m7G46) in tRNA. The polypeptide is tRNA (guanine-N(7)-)-methyltransferase (Novosphingobium aromaticivorans (strain ATCC 700278 / DSM 12444 / CCUG 56034 / CIP 105152 / NBRC 16084 / F199)).